Consider the following 299-residue polypeptide: Tyrosine recombinase XerD (299 aa).

The Core-binding (CB) domain occupies 2–89 (ETVNNNLQQF…AIRSFHQFLL (88 aa)). A Tyr recombinase domain is found at 110–293 (RLPKALTIEE…TKTRMRDVYA (184 aa)). Active-site residues include arginine 150, lysine 174, histidine 245, arginine 248, and histidine 271. Tyrosine 280 acts as the O-(3'-phospho-DNA)-tyrosine intermediate in catalysis.

The protein belongs to the 'phage' integrase family. XerD subfamily. Forms a cyclic heterotetrameric complex composed of two molecules of XerC and two molecules of XerD.

Its subcellular location is the cytoplasm. Its function is as follows. Site-specific tyrosine recombinase, which acts by catalyzing the cutting and rejoining of the recombining DNA molecules. The XerC-XerD complex is essential to convert dimers of the bacterial chromosome into monomers to permit their segregation at cell division. It also contributes to the segregational stability of plasmids. The chain is Tyrosine recombinase XerD from Halalkalibacterium halodurans (strain ATCC BAA-125 / DSM 18197 / FERM 7344 / JCM 9153 / C-125) (Bacillus halodurans).